Reading from the N-terminus, the 417-residue chain is UDP-N-acetylglucosamine 1-carboxyvinyltransferase (417 aa).

22 to 23 contributes to the phosphoenolpyruvate binding site; sequence KN. Arg-93 contacts UDP-N-acetyl-alpha-D-glucosamine. Cys-117 (proton donor) is an active-site residue. A 2-(S-cysteinyl)pyruvic acid O-phosphothioketal modification is found at Cys-117. UDP-N-acetyl-alpha-D-glucosamine-binding positions include 122–126, Asp-304, and Ile-326; that span reads RPVDQ.

This sequence belongs to the EPSP synthase family. MurA subfamily.

The protein localises to the cytoplasm. It carries out the reaction phosphoenolpyruvate + UDP-N-acetyl-alpha-D-glucosamine = UDP-N-acetyl-3-O-(1-carboxyvinyl)-alpha-D-glucosamine + phosphate. It functions in the pathway cell wall biogenesis; peptidoglycan biosynthesis. In terms of biological role, cell wall formation. Adds enolpyruvyl to UDP-N-acetylglucosamine. The sequence is that of UDP-N-acetylglucosamine 1-carboxyvinyltransferase from Neisseria meningitidis serogroup B (strain ATCC BAA-335 / MC58).